Consider the following 615-residue polypeptide: Probable methylmalonyl-CoA mutase small subunit (615 aa).

This sequence belongs to the methylmalonyl-CoA mutase family. Heterodimer of an alpha and a beta chain. Adenosylcob(III)alamin is required as a cofactor.

It catalyses the reaction (R)-methylmalonyl-CoA = succinyl-CoA. It participates in metabolic intermediate metabolism; propanoyl-CoA degradation; succinyl-CoA from propanoyl-CoA: step 3/3. Functionally, catalyzes the isomerization of succinyl-CoA to methylmalonyl-CoA during synthesis of propionate from tricarboxylic acid-cycle intermediates. The polypeptide is Probable methylmalonyl-CoA mutase small subunit (mutA) (Mycobacterium bovis (strain ATCC BAA-935 / AF2122/97)).